Consider the following 179-residue polypeptide: Inosine/xanthosine triphosphatase (179 aa).

E71 contacts Mg(2+). 71–72 (EA) serves as a coordination point for substrate.

It belongs to the YjjX NTPase family. As to quaternary structure, homodimer. Requires Mg(2+) as cofactor. Mn(2+) serves as cofactor.

It catalyses the reaction XTP + H2O = XDP + phosphate + H(+). It carries out the reaction ITP + H2O = IDP + phosphate + H(+). Functionally, phosphatase that hydrolyzes non-canonical purine nucleotides such as XTP and ITP to their respective diphosphate derivatives. Probably excludes non-canonical purines from DNA/RNA precursor pool, thus preventing their incorporation into DNA/RNA and avoiding chromosomal lesions. The polypeptide is Inosine/xanthosine triphosphatase (Shewanella sp. (strain MR-4)).